We begin with the raw amino-acid sequence, 740 residues long: ATP-dependent DNA helicase Hel308 (740 aa).

Residues Gln28 and 46–53 (IPTASGKT) each bind ATP. The region spanning 33-204 (RQGLLDGKNL…WMDAALVQSE (172 aa)) is the Helicase ATP-binding domain. A DEAH box motif is present at residues 149 to 152 (DEVH). The region spanning 236–436 (EVNSLVADTL…EPAMRAHALS (201 aa)) is the Helicase C-terminal domain. Residues 716 to 740 (VDHTPPETEEQPQVSGQSTLFSFDG) form a disordered region. Over residues 726 to 740 (QPQVSGQSTLFSFDG) the composition is skewed to polar residues.

It belongs to the helicase family. Hel308 subfamily. As to quaternary structure, monomer.

The catalysed reaction is Couples ATP hydrolysis with the unwinding of duplex DNA by translocating in the 3'-5' direction.. It catalyses the reaction ATP + H2O = ADP + phosphate + H(+). Its function is as follows. DNA-dependent ATPase and 3'-5' DNA helicase that may be involved in repair of stalled replication forks. This chain is ATP-dependent DNA helicase Hel308, found in Methanocella arvoryzae (strain DSM 22066 / NBRC 105507 / MRE50).